A 535-amino-acid chain; its full sequence is Light-independent protochlorophyllide reductase subunit B (535 aa).

[4Fe-4S] cluster is bound at residue D36. Catalysis depends on D287, which acts as the Proton donor. G422–L423 is a binding site for substrate.

Belongs to the ChlB/BchB/BchZ family. In terms of assembly, protochlorophyllide reductase is composed of three subunits; BchL, BchN and BchB. Forms a heterotetramer of two BchB and two BchN subunits. The cofactor is [4Fe-4S] cluster.

The enzyme catalyses chlorophyllide a + oxidized 2[4Fe-4S]-[ferredoxin] + 2 ADP + 2 phosphate = protochlorophyllide a + reduced 2[4Fe-4S]-[ferredoxin] + 2 ATP + 2 H2O. It functions in the pathway porphyrin-containing compound metabolism; bacteriochlorophyll biosynthesis (light-independent). Component of the dark-operative protochlorophyllide reductase (DPOR) that uses Mg-ATP and reduced ferredoxin to reduce ring D of protochlorophyllide (Pchlide) to form chlorophyllide a (Chlide). This reaction is light-independent. The NB-protein (BchN-BchB) is the catalytic component of the complex. The polypeptide is Light-independent protochlorophyllide reductase subunit B (Rhodopseudomonas palustris (strain BisB5)).